Here is a 189-residue protein sequence, read N- to C-terminus: Protein GrpE (189 aa).

The tract at residues 1 to 21 is disordered; it reads MADEQNLDNQNPETPEQSQAD. The segment covering 7 to 20 has biased composition (polar residues); sequence LDNQNPETPEQSQA.

Belongs to the GrpE family. As to quaternary structure, homodimer.

The protein localises to the cytoplasm. In terms of biological role, participates actively in the response to hyperosmotic and heat shock by preventing the aggregation of stress-denatured proteins, in association with DnaK and GrpE. It is the nucleotide exchange factor for DnaK and may function as a thermosensor. Unfolded proteins bind initially to DnaJ; upon interaction with the DnaJ-bound protein, DnaK hydrolyzes its bound ATP, resulting in the formation of a stable complex. GrpE releases ADP from DnaK; ATP binding to DnaK triggers the release of the substrate protein, thus completing the reaction cycle. Several rounds of ATP-dependent interactions between DnaJ, DnaK and GrpE are required for fully efficient folding. The chain is Protein GrpE from Stutzerimonas stutzeri (strain A1501) (Pseudomonas stutzeri).